We begin with the raw amino-acid sequence, 638 residues long: Leucine-rich repeat-containing protein 63 (638 aa).

2 disordered regions span residues 220 to 241 and 306 to 325; these read VPSTSSVIPEPQWSERTHPSAA and TTAAVSGKTEAHKPPETVQR. LRR repeat units follow at residues 389–412, 413–435, 437–458, 460–481, 482–504, and 532–556; these read AFQLVYLNLSFNDLNQFPIEILYL, QNLQVLKLRNNPIKEIPSEIHLL, YLRIFSIAFNYITKLPDGLFCL, YLEELDVSYNEIENISNEIQKL, RSLEKLIVDGNPITSFPPGILKL, and LTQICSLFLVKNKLLDYIPDAVRKS.

The polypeptide is Leucine-rich repeat-containing protein 63 (Mus musculus (Mouse)).